A 220-amino-acid chain; its full sequence is Large ribosomal subunit protein bL25 (220 aa).

The segment covering 186–199 has biased composition (acidic residues); that stretch reads ELEDEDEDEDEVAA. Residues 186 to 220 are disordered; that stretch reads ELEDEDEDEDEVAADEVPATEVDDQAAVKEGEGKE. Residues 211 to 220 show a composition bias toward basic and acidic residues; it reads AAVKEGEGKE.

The protein belongs to the bacterial ribosomal protein bL25 family. CTC subfamily. In terms of assembly, part of the 50S ribosomal subunit; part of the 5S rRNA/L5/L18/L25 subcomplex. Contacts the 5S rRNA. Binds to the 5S rRNA independently of L5 and L18.

Its function is as follows. This is one of the proteins that binds to the 5S RNA in the ribosome where it forms part of the central protuberance. The polypeptide is Large ribosomal subunit protein bL25 (Christiangramia forsetii (strain DSM 17595 / CGMCC 1.15422 / KT0803) (Gramella forsetii)).